Reading from the N-terminus, the 398-residue chain is MKQLTILGSTGSIGCSTLDVVRHNPDSFRVIALVAGKNVARMAEQCLEFSPRYAVMDDTSSAEQLKIMLQQHGSRTEVLSGQQAACEMAALDEVGHVMAAIVGAAGLLPTLAAIRAGKTILLANKESLVTCGRLFMDEVKRSNARLLPVDSEHNAIFQSLPQSIQHNLGYADLEQNGVTSILLTGSGGPFRETPMCDLAAMTPDQACRHPNWSMGRKVSVDSATMMNKGLEYIEARWLFNASARQMEVLIHPQSVIHSMVRYQDGSVLAQLGEPDMRTPIAHTMAWPNRVTSGAQPLDFCKLSALTFSAPDYQRYPCLKLAMEAFEQGQAATTALNAANEITVAAFLAQQIRFTDIAGLNLAVLERMDLQEPASVEDVLQVDAIAREVARKQVIRLSR.

Positions 10, 11, 12, 13, 36, 37, 38, and 124 each coordinate NADPH. Position 125 (Lys125) interacts with 1-deoxy-D-xylulose 5-phosphate. Glu126 is a binding site for NADPH. Asp150 lines the Mn(2+) pocket. 1-deoxy-D-xylulose 5-phosphate is bound by residues Ser151, Glu152, Ser186, and His209. Residue Glu152 participates in Mn(2+) binding. Gly215 lines the NADPH pocket. 1-deoxy-D-xylulose 5-phosphate is bound by residues Ser222, Asn227, Lys228, and Glu231. Glu231 contacts Mn(2+).

The protein belongs to the DXR family. Homodimer. The cofactor is Mg(2+). Mn(2+) is required as a cofactor.

The catalysed reaction is 2-C-methyl-D-erythritol 4-phosphate + NADP(+) = 1-deoxy-D-xylulose 5-phosphate + NADPH + H(+). It functions in the pathway isoprenoid biosynthesis; isopentenyl diphosphate biosynthesis via DXP pathway; isopentenyl diphosphate from 1-deoxy-D-xylulose 5-phosphate: step 1/6. In terms of biological role, catalyzes the NADPH-dependent rearrangement and reduction of 1-deoxy-D-xylulose-5-phosphate (DXP) to 2-C-methyl-D-erythritol 4-phosphate (MEP). In Salmonella choleraesuis (strain SC-B67), this protein is 1-deoxy-D-xylulose 5-phosphate reductoisomerase.